A 32-amino-acid polypeptide reads, in one-letter code: Cytochrome b6-f complex subunit 7 (32 aa).

Residues 9 to 27 traverse the membrane as a helical segment; that stretch reads AALFWVLIPLGLAGGALLL.

This sequence belongs to the PetM family. In terms of assembly, the 4 large subunits of the cytochrome b6-f complex are cytochrome b6, subunit IV (17 kDa polypeptide, PetD), cytochrome f and the Rieske protein, while the 4 small subunits are PetG, PetL, PetM and PetN. The complex functions as a dimer.

It is found in the cellular thylakoid membrane. Component of the cytochrome b6-f complex, which mediates electron transfer between photosystem II (PSII) and photosystem I (PSI), cyclic electron flow around PSI, and state transitions. The chain is Cytochrome b6-f complex subunit 7 from Synechococcus sp. (strain RCC307).